Here is a 352-residue protein sequence, read N- to C-terminus: DNA polymerase IV (352 aa).

Residues 6–187 (IIHIDADCFY…VPVKFISGIG (182 aa)) enclose the UmuC domain. Mg(2+) contacts are provided by aspartate 10 and aspartate 105. The active site involves glutamate 106.

It belongs to the DNA polymerase type-Y family. As to quaternary structure, monomer. Requires Mg(2+) as cofactor.

It is found in the cytoplasm. It carries out the reaction DNA(n) + a 2'-deoxyribonucleoside 5'-triphosphate = DNA(n+1) + diphosphate. Its function is as follows. Poorly processive, error-prone DNA polymerase involved in untargeted mutagenesis. Copies undamaged DNA at stalled replication forks, which arise in vivo from mismatched or misaligned primer ends. These misaligned primers can be extended by PolIV. Exhibits no 3'-5' exonuclease (proofreading) activity. May be involved in translesional synthesis, in conjunction with the beta clamp from PolIII. The polypeptide is DNA polymerase IV (Marinomonas sp. (strain MWYL1)).